The primary structure comprises 386 residues: O-methyltransferase 10 (386 aa).

S-adenosyl-L-homocysteine contacts are provided by Ser207, Gly231, Asp254, Asp274, and Lys288. Asp254 contacts S-adenosyl-L-methionine. His292 functions as the Proton acceptor in the catalytic mechanism.

Belongs to the class I-like SAM-binding methyltransferase superfamily. Cation-independent O-methyltransferase family. Homodimer.

It carries out the reaction dopamine + S-adenosyl-L-methionine = 4-methoxytyramine + S-adenosyl-L-homocysteine + H(+). It catalyses the reaction 3,4-dihydroxy-5-methoxyphenethylamine + S-adenosyl-L-methionine = 3-hydroxy-4,5-dimethoxyphenethylamine + S-adenosyl-L-homocysteine + H(+). The enzyme catalyses 3-hydroxy-4,5-dimethoxyphenethylamine + S-adenosyl-L-methionine = mescaline + S-adenosyl-L-homocysteine + H(+). The catalysed reaction is 4-hydroxy-3,5-dimethoxyphenethylamine + S-adenosyl-L-methionine = mescaline + S-adenosyl-L-homocysteine + H(+). Its pathway is aromatic compound metabolism. It participates in alkaloid biosynthesis. Its function is as follows. O-methyltransferase participating in the biosynthesis of natural products derived from phenylethylamine, including mescaline, a natural hallucinogen potentially used in psychotherapeutic treatments. Catalyzes the O-methylation of mescaline para hydroxyl groups, using dopamine, 3,4-dihydroxy-5-methoxyphenethylamine, 3-hydroxy-4,5-dimethoxyphenethylamine and 4-hydroxy-3,5-dimethoxyphenethylamine as substrates. This Lophophora williamsii (Peyote) protein is O-methyltransferase 10.